The following is a 234-amino-acid chain: uncharacterized protein (234 aa).

One can recognise a tRNA-binding domain in the interval 103–211; that stretch reads LAKKVPFVVC…SHIKIGKSFL (109 aa).

This is an uncharacterized protein from Mycoplasma pneumoniae (strain ATCC 29342 / M129 / Subtype 1) (Mycoplasmoides pneumoniae).